Here is a 521-residue protein sequence, read N- to C-terminus: MSFSRTEAAPAATLPDLAATLAAPRDGAFLQLGAAFLTRQPAAPLPAPYVVGFSDDAARMLGLDPALRDAPGFAGLFCGNPTRDWPQASLPYASVYSGHQFGVWAGQLGDGRALTIGELEHDGRRYELQLKGAGRTPYSRMGDGRAVLRSSIREYLCSEAMHHLGIPTTRALAVIGSDQPVVREEIETSAVVTRVAESFVRFGHFEHFFANDRPEQLRALADHVIDRFYPACRDADDPYLALLAEATRRTAELVAQWQAVGFCHGVMNTDNMSILGVTIDYGPFGFIDAFDAKHVCNHSDTHGRYAYRMQPRIAHWNCFCLAQALLPLIGLHRDAPSEDARAERAVEDAHAVLGRFAEQFGPALERAMRAKLGLELEREGDAALANQLLEIMDASRADFTLTFRHLARVSKHDARGDAPVRDLFVDRDAFDRWANLYRARLSEEARDDAARAAAMNRANPKYVLRNHLAETAIRRAKEKDFSEVERLAAVLRRPFDEQPEHDAYAALPPDWASTLEVSCSS.

8 residues coordinate ATP: G109, G111, R112, K131, D143, G144, R194, and R201. Catalysis depends on D270, which acts as the Proton acceptor. Residues N271 and D280 each coordinate Mg(2+). Residue D280 participates in ATP binding.

This sequence belongs to the SELO family. Requires Mg(2+) as cofactor. Mn(2+) serves as cofactor.

The enzyme catalyses L-seryl-[protein] + ATP = 3-O-(5'-adenylyl)-L-seryl-[protein] + diphosphate. It catalyses the reaction L-threonyl-[protein] + ATP = 3-O-(5'-adenylyl)-L-threonyl-[protein] + diphosphate. The catalysed reaction is L-tyrosyl-[protein] + ATP = O-(5'-adenylyl)-L-tyrosyl-[protein] + diphosphate. It carries out the reaction L-histidyl-[protein] + UTP = N(tele)-(5'-uridylyl)-L-histidyl-[protein] + diphosphate. The enzyme catalyses L-seryl-[protein] + UTP = O-(5'-uridylyl)-L-seryl-[protein] + diphosphate. It catalyses the reaction L-tyrosyl-[protein] + UTP = O-(5'-uridylyl)-L-tyrosyl-[protein] + diphosphate. Its function is as follows. Nucleotidyltransferase involved in the post-translational modification of proteins. It can catalyze the addition of adenosine monophosphate (AMP) or uridine monophosphate (UMP) to a protein, resulting in modifications known as AMPylation and UMPylation. This chain is Protein nucleotidyltransferase YdiU, found in Burkholderia thailandensis (strain ATCC 700388 / DSM 13276 / CCUG 48851 / CIP 106301 / E264).